The chain runs to 726 residues: Serine/threonine-protein kinase PKH3 (726 aa).

The Protein kinase domain occupies 10 to 271; the sequence is FLFREELGHG…LEQIKKHKWF (262 aa). Residues 16–24 and Lys39 contribute to the ATP site; that span reads LGHGSYSTV. Asp136 (proton acceptor) is an active-site residue. The segment at 629–679 is disordered; it reads QDIPLPSPAKSSSNSGVSEPISKIPPRQLVSASEQSHKAKSEAHTKKANSY. The segment covering 663 to 673 has biased composition (basic and acidic residues); it reads QSHKAKSEAHT.

Belongs to the protein kinase superfamily. Ser/Thr protein kinase family.

It carries out the reaction L-seryl-[protein] + ATP = O-phospho-L-seryl-[protein] + ADP + H(+). The enzyme catalyses L-threonyl-[protein] + ATP = O-phospho-L-threonyl-[protein] + ADP + H(+). Functionally, serine/threonine-protein kinase. The sequence is that of Serine/threonine-protein kinase PKH3 (PKH3) from Eremothecium gossypii (strain ATCC 10895 / CBS 109.51 / FGSC 9923 / NRRL Y-1056) (Yeast).